The sequence spans 97 residues: Prophage lipoprotein Bor homolog (97 aa).

An N-terminal signal peptide occupies residues 1-16 (MKKMLLATALALLITG). The N-palmitoyl cysteine moiety is linked to residue Cys17. Residue Cys17 is the site of S-diacylglycerol cysteine attachment.

This sequence belongs to the lambda phage bor family.

It is found in the cell membrane. The protein is Prophage lipoprotein Bor homolog (borD) of Escherichia coli (strain K12).